The primary structure comprises 275 residues: Elongation factor Ts (275 aa).

The tract at residues 76–79 (TDFV) is involved in Mg(2+) ion dislocation from EF-Tu.

Belongs to the EF-Ts family.

The protein resides in the cytoplasm. Its function is as follows. Associates with the EF-Tu.GDP complex and induces the exchange of GDP to GTP. It remains bound to the aminoacyl-tRNA.EF-Tu.GTP complex up to the GTP hydrolysis stage on the ribosome. This Mycobacterium avium (strain 104) protein is Elongation factor Ts.